The chain runs to 489 residues: Dipeptide and tripeptide permease B (489 aa).

Residues 1 to 27 (MNTTAPTGLLQQPRPFFMIFFVELWER) are Cytoplasmic-facing. Residues 28–48 (FGYYGVQGILAVFFVKQLGFS) traverse the membrane as a helical segment. The Periplasmic segment spans residues 49–52 (QEQA). The chain crosses the membrane as a helical span at residues 53–73 (FITFGAFAALVYGLISIGGYV). Residues 74–82 (GDHLLGTKR) lie on the Cytoplasmic side of the membrane. Residues 83–103 (TLVLGAIVLAIGYFMTGMSLL) traverse the membrane as a helical segment. Residues 104 to 106 (NPD) are Periplasmic-facing. The helical transmembrane segment at 107-127 (LIFIALGTIAVGNGLFKANPA) threads the bilayer. Residues 128-146 (SLLSKCYQPKDPRLDGAFT) are Cytoplasmic-facing. Residues 147 to 167 (LFYMSINIGSLLSLSLAPVIA) form a helical membrane-spanning segment. At 168–172 (DKFGY) the chain is on the periplasmic side. A helical membrane pass occupies residues 173 to 193 (AVTYNLCGAGLIVALLVYFAC). Topologically, residues 194-214 (RGMVKNIGSEPDHKPLRFRNL) are cytoplasmic. A helical transmembrane segment spans residues 215 to 235 (LLVLLGTVVMIFLCAWLMHNV). Residue Lys-236 is a topological domain, periplasmic. Residues 237–257 (IANLVLIVLSIVVTIFFFREA) form a helical membrane-spanning segment. Over 258 to 267 (FRLDKTGRNK) the chain is Cytoplasmic. Residues 268-288 (MFVAFILMIEAVLFYILYAQM) traverse the membrane as a helical segment. Over 289 to 315 (PTSLNFFAINNVHHEILGFAINPVSFQ) the chain is Periplasmic. The chain crosses the membrane as a helical span at residues 316–338 (ALNPFWVVVASPVLAAIYTRLGS). Residues 339 to 348 (KGKDLTMPMK) are Cytoplasmic-facing. Residues 349 to 369 (FTLGMFLCALGFLTAAAGMWF) traverse the membrane as a helical segment. Topologically, residues 370–379 (ADAQGLTSPW) are periplasmic. The chain crosses the membrane as a helical span at residues 380 to 400 (FIVLVYLFQSLGELLISALGL). Residues 401–410 (AMVAALVPQH) are Cytoplasmic-facing. A helical transmembrane segment spans residues 411 to 431 (LMGFILGMWFLTQAAAFLLGG). Over 432–454 (YVATFTAVPENITDPLQTLPIYT) the chain is Periplasmic. The helical transmembrane segment at 455–475 (GVFSKIGLVTLAVTVVMAIMV) threads the bilayer. Residues 476–489 (PWLNRMINTPGTEQ) lie on the Cytoplasmic side of the membrane.

It belongs to the major facilitator superfamily. Proton-dependent oligopeptide transporter (POT/PTR) (TC 2.A.17) family. DtpB subfamily.

The protein resides in the cell inner membrane. In terms of biological role, proton-dependent permease that transports di- and tripeptides. This chain is Dipeptide and tripeptide permease B, found in Salmonella typhimurium (strain LT2 / SGSC1412 / ATCC 700720).